The sequence spans 112 residues: Putative pterin-4-alpha-carbinolamine dehydratase (112 aa).

This sequence belongs to the pterin-4-alpha-carbinolamine dehydratase family.

The enzyme catalyses (4aS,6R)-4a-hydroxy-L-erythro-5,6,7,8-tetrahydrobiopterin = (6R)-L-erythro-6,7-dihydrobiopterin + H2O. This Vibrio parahaemolyticus serotype O3:K6 (strain RIMD 2210633) protein is Putative pterin-4-alpha-carbinolamine dehydratase.